Consider the following 129-residue polypeptide: Glycophorin-A (129 aa).

An N-terminal signal peptide occupies residues 1 to 17; the sequence is MYEKIVIVLLLSGYIST. At Gln18 the chain carries Pyrrolidone carboxylic acid. Topologically, residues 18 to 82 are extracellular; the sequence is QDVTEIIPHE…QLVHIFSEPV (65 aa). Ser29 and Ser30 each carry an O-linked (GalNAc...) serine glycan. Thr34 carries an O-linked (GalNAc...) threonine glycan. An O-linked (GalNAc...) serine glycan is attached at Ser40. 2 O-linked (GalNAc...) threonine glycosylation sites follow: Thr41 and Thr48. The O-linked (GalNAc...) serine glycan is linked to Ser56. A helical transmembrane segment spans residues 83–103; sequence IIGIIYAVMLGIIITILSIAF. The Cytoplasmic portion of the chain corresponds to 104–129; sequence CIGQLTKKSSLPAQVASPEDVDPEVL.

This sequence belongs to the glycophorin-A family. In terms of assembly, homodimer. Component of the ankyrin-1 complex in the erythrocyte, composed of ANK1, RHCE, RHAG, SLC4A1, EPB42, GYPA, GYPB and AQP1. Interacts with SLC4A1; a GYPA monomer is bound at each end of the SLC4A1 dimer forming a heterotetramer.

It localises to the membrane. Its function is as follows. Component of the ankyrin-1 complex, a multiprotein complex involved in the stability and shape of the erythrocyte membrane. Glycophorin A is the major intrinsic membrane protein of the erythrocyte. The N-terminal glycosylated segment, which lies outside the erythrocyte membrane, has MN blood group receptors. Appears to be important for the function of SLC4A1 and is required for high activity of SLC4A1. May be involved in translocation of SLC4A1 to the plasma membrane. The protein is Glycophorin-A of Canis lupus familiaris (Dog).